A 205-amino-acid chain; its full sequence is uncharacterized protein (205 aa).

Residues 10 to 75 (QDLLSAVDQQ…AANLMTVMTD (66 aa)) adopt a coiled-coil conformation. The interval 111–138 (PLSNTNNEQTSPPASGKTSETPKKNPTN) is disordered. Polar residues predominate over residues 112 to 138 (LSNTNNEQTSPPASGKTSETPKKNPTN).

The protein belongs to the asfivirus K205R family.

The protein resides in the host cytoplasm. Its function is as follows. Induces host endoplasmic reticulum stress and consequently activates autophagy and NF-kappa-B signaling pathway. In turn, may induce autophagy-mediated STING1 degradation and innate immune evasion. This is an uncharacterized protein from Ornithodoros (relapsing fever ticks).